The sequence spans 90 residues: MAVKIRLKRMGANKKPFYRIVVADSRAPRDGKFIEEIGYYNPISEPKQVRINDEKAIKWLATGAQPTEVVKKLLVKNGVIEKFEASKQAK.

It belongs to the bacterial ribosomal protein bS16 family.

In Clostridioides difficile (strain 630) (Peptoclostridium difficile), this protein is Small ribosomal subunit protein bS16.